A 138-amino-acid polypeptide reads, in one-letter code: Cystatin-11 (138 aa).

Positions 1–26 (MMAEPWQALQLLLAILLTLMALPYQA) are cleaved as a signal peptide. 2 disulfide bridges follow: Cys-94/Cys-102 and Cys-115/Cys-135. An N-linked (GlcNAc...) asparagine glycan is attached at Asn-132.

This sequence belongs to the cystatin family. As to expression, detected in the epithelium and lumen of the epididymis, and in sperm (at protein level).

It localises to the secreted. Functionally, has antibacterial activity against the Gram-negative bacteria E.coli. May play a role in sperm maturation and fertilization. The chain is Cystatin-11 (CST11) from Homo sapiens (Human).